We begin with the raw amino-acid sequence, 150 residues long: Small ribosomal subunit protein uS7c (150 aa).

This sequence belongs to the universal ribosomal protein uS7 family. As to quaternary structure, part of the 30S ribosomal subunit.

The protein resides in the plastid. The protein localises to the chloroplast. Functionally, one of the primary rRNA binding proteins, it binds directly to 16S rRNA where it nucleates assembly of the head domain of the 30S subunit. This Huperzia lucidula (Shining clubmoss) protein is Small ribosomal subunit protein uS7c (rps7).